The chain runs to 1477 residues: Lysine-specific demethylase rbr-2 (1477 aa).

The tract at residues 1 to 37 is disordered; that stretch reads MRARRQENSISTPSAPSTSTSPRKKASIGNSRSKNHG. The segment covering 9–21 has biased composition (low complexity); that stretch reads SISTPSAPSTSTS. Residues 56 to 97 enclose the JmjN domain; it reads APIYYPTEEEFSDPIEYVAKIRHEAEKFGVVKIVPPANFKPP. The 98-residue stretch at 121-218 folds into the ARID domain; sequence VKEKHTFIDR…HIEPFNRNLK (98 aa). The interval 222–314 is disordered; it reads MKNDDESDDE…KAEGDDDDDE (93 aa). Positions 246 to 259 are enriched in basic and acidic residues; that stretch reads MRTEIEVPNDKTTE. Basic residues-rich tracts occupy residues 272-283 and 295-304; these read GRRRSKNKKASS and NSTRGRKNKK. Residues 319-371 form a PHD-type 1 zinc finger; that stretch reads QVFCVACNEGKDEDLLLLCDIDGCNNGRHTYCCDPVLDEVPEGEWRCPKCIES. One can recognise a JmjC domain in the interval 468–634; that stretch reads QYASHAWNLN…KGRECVESYS (167 aa). Positions 514, 517, and 602 each coordinate Fe cation. Residues 874-926 are a coiled coil; the sequence is IIDKLEKWMEQVEMWRNRAKDAIYREQEYSKEEIEKIIEEGDEYDIKLEEIDE. The PHD-type 2 zinc finger occupies 1203–1257; sequence LEACSCLGFNKSDDSESTLTCIMCDSEFHVRCCEWSPFLEKLPEGCFLCVRCLRG. Residues 1375 to 1404 are disordered; sequence TAKRKRPSVSHKETSKKSRKRQSQASPSEY. The PHD-type 3 zinc finger occupies 1411-1466; it reads FKSCQARACLKPYGDSVNWVMCEAGCKNWFHVICLGFTLREINDMHEYRCSSCLDH.

This sequence belongs to the JARID1 histone demethylase family. Fe(2+) is required as a cofactor.

It is found in the nucleus. It catalyses the reaction N(6),N(6),N(6)-trimethyl-L-lysyl(4)-[histone H3] + 3 2-oxoglutarate + 3 O2 = L-lysyl(4)-[histone H3] + 3 formaldehyde + 3 succinate + 3 CO2. Functionally, histone demethylase that specifically demethylates 'Lys-4' of histone H3, thereby playing a central role in histone code. Does not demethylate histone H3 'Lys-9', H3 'Lys-27', H3 'Lys-36', H3 'Lys-79' or H4 'Lys-20'. Demethylates trimethylated and dimethylated but not monomethylated H3 'Lys-4'. Required for normal longevity of the soma in a germline-dependent manner. Implicated in the epigenetic inheritance of lifespan over several generations. Involved in larval development and vulva formation. The sequence is that of Lysine-specific demethylase rbr-2 (rbr-2) from Caenorhabditis elegans.